The primary structure comprises 159 residues: Protransforming growth factor alpha (159 aa).

An N-terminal signal peptide occupies residues M1 to L23. Positions E24–A38 are cleaved as a propeptide — removed in mature form. Over E24 to Q97 the chain is Extracellular. An N-linked (GlcNAc...) asparagine glycan is attached at N25. An EGF-like domain is found at N44–H83. Intrachain disulfides connect C46–C59, C54–C70, and C72–C81. Residues V89 to V159 constitute a propeptide, removed in mature form. A helical membrane pass occupies residues A98–C123. Topologically, residues Q124–V159 are cytoplasmic. S-palmitoyl cysteine attachment occurs at residues C152 and C153.

Interacts with the PDZ domains of SDCBP and SNTA1. The interaction with SDCBP, is required for the targeting to the cell surface. In the endoplasmic reticulum, in its immature form (i.e. with a prosegment and lacking full N-glycosylation), interacts with CNIH. In the Golgi apparatus, may form a complex with CNIH and GORASP2. Interacts (via cytoplasmic C-terminal domain) with NKD2. Interacts with MAGI3.

It is found in the secreted. The protein localises to the extracellular space. Its subcellular location is the cell membrane. In terms of biological role, TGF alpha is a mitogenic polypeptide that is able to bind to the EGF receptor/EGFR and to act synergistically with TGF beta to promote anchorage-independent cell proliferation in soft agar. The protein is Protransforming growth factor alpha (Tgfa) of Mus musculus (Mouse).